Reading from the N-terminus, the 89-residue chain is UPF0367 protein PCC8801_1959 (89 aa).

The protein belongs to the UPF0367 family.

The chain is UPF0367 protein PCC8801_1959 from Rippkaea orientalis (strain PCC 8801 / RF-1) (Cyanothece sp. (strain PCC 8801)).